Here is a 308-residue protein sequence, read N- to C-terminus: Aspartate carbamoyltransferase catalytic subunit (308 aa).

2 residues coordinate carbamoyl phosphate: Arg57 and Thr58. Residue Lys86 participates in L-aspartate binding. Carbamoyl phosphate contacts are provided by Arg107, His135, and Gln138. L-aspartate contacts are provided by Arg167 and Arg228. 2 residues coordinate carbamoyl phosphate: Leu267 and Pro268.

Belongs to the aspartate/ornithine carbamoyltransferase superfamily. ATCase family. In terms of assembly, heterooligomer of catalytic and regulatory chains.

The enzyme catalyses carbamoyl phosphate + L-aspartate = N-carbamoyl-L-aspartate + phosphate + H(+). Its pathway is pyrimidine metabolism; UMP biosynthesis via de novo pathway; (S)-dihydroorotate from bicarbonate: step 2/3. Its function is as follows. Catalyzes the condensation of carbamoyl phosphate and aspartate to form carbamoyl aspartate and inorganic phosphate, the committed step in the de novo pyrimidine nucleotide biosynthesis pathway. This chain is Aspartate carbamoyltransferase catalytic subunit, found in Methanosarcina acetivorans (strain ATCC 35395 / DSM 2834 / JCM 12185 / C2A).